Here is a 516-residue protein sequence, read N- to C-terminus: Maturase K (516 aa).

The protein belongs to the intron maturase 2 family. MatK subfamily.

It is found in the plastid. It localises to the chloroplast. Usually encoded in the trnK tRNA gene intron. Probably assists in splicing its own and other chloroplast group II introns. In Chara vulgaris (Common stonewort), this protein is Maturase K.